A 265-amino-acid chain; its full sequence is 4-hydroxy-tetrahydrodipicolinate reductase (265 aa).

NAD(+) is bound by residues 7–12 and Asp33; that span reads GASGRM. Arg34 is a binding site for NADP(+). Residues 96-98 and 120-123 contribute to the NAD(+) site; these read GTT and SANM. His153 acts as the Proton donor/acceptor in catalysis. His154 serves as a coordination point for (S)-2,3,4,5-tetrahydrodipicolinate. The active-site Proton donor is the Lys157. 163-164 serves as a coordination point for (S)-2,3,4,5-tetrahydrodipicolinate; that stretch reads GT.

The protein belongs to the DapB family.

It localises to the cytoplasm. It carries out the reaction (S)-2,3,4,5-tetrahydrodipicolinate + NAD(+) + H2O = (2S,4S)-4-hydroxy-2,3,4,5-tetrahydrodipicolinate + NADH + H(+). The enzyme catalyses (S)-2,3,4,5-tetrahydrodipicolinate + NADP(+) + H2O = (2S,4S)-4-hydroxy-2,3,4,5-tetrahydrodipicolinate + NADPH + H(+). It functions in the pathway amino-acid biosynthesis; L-lysine biosynthesis via DAP pathway; (S)-tetrahydrodipicolinate from L-aspartate: step 4/4. Catalyzes the conversion of 4-hydroxy-tetrahydrodipicolinate (HTPA) to tetrahydrodipicolinate. This chain is 4-hydroxy-tetrahydrodipicolinate reductase, found in Burkholderia pseudomallei (strain 1106a).